Consider the following 289-residue polypeptide: Syntaxin-3 (289 aa).

The Cytoplasmic segment spans residues 1-263; that stretch reads MKDRLEQLKA…MKYQGQARKK (263 aa). Residues 32–111 adopt a coiled-coil conformation; sequence MDEFFSEIEE…IEEDEVRSSA (80 aa). Residues 191 to 253 enclose the t-SNARE coiled-coil homology domain; sequence LSEIEGRHKD…EKARDETKRA (63 aa). A helical; Anchor for type IV membrane protein transmembrane segment spans residues 264–284; it reads LIIIIVIVVVLLGILALIIGL. Over 285 to 289 the chain is Extracellular; it reads SVGLK.

The protein belongs to the syntaxin family. Interacts with REEP6. Interacts with PRPH2 in rod and cone photoreceptors. Interacts with ROM1. Interacts with SNAP25. Interacts with VAMP2. In terms of tissue distribution, heart, spleen, lung and kidney.

Its subcellular location is the membrane. In terms of biological role, potentially involved in docking of synaptic vesicles at presynaptic active zones. Apical receptor involved in membrane fusion of apical vesicles. Essential for survival of retinal photoreceetors. This Rattus norvegicus (Rat) protein is Syntaxin-3 (Stx3).